The following is a 200-amino-acid chain: Large ribosomal subunit protein bL25 (200 aa).

Belongs to the bacterial ribosomal protein bL25 family. CTC subfamily. As to quaternary structure, part of the 50S ribosomal subunit; part of the 5S rRNA/L5/L18/L25 subcomplex. Contacts the 5S rRNA. Binds to the 5S rRNA independently of L5 and L18.

Functionally, this is one of the proteins that binds to the 5S RNA in the ribosome where it forms part of the central protuberance. This is Large ribosomal subunit protein bL25 from Pseudomonas fluorescens (strain SBW25).